The following is a 1312-amino-acid chain: Beta-N-acetylhexosaminidase (1312 aa).

An N-terminal signal peptide occupies residues 1–33; that stretch reads MKHEKQQRFSIRKYAVGAASVLIGFAFQAQTVA. Positions 38 to 59 are enriched in polar residues; the sequence is TPTTTENQPTIHTVSDSPQSSE. Residues 38–178 are disordered; that stretch reads TPTTTENQPT…ATEAGKERAA (141 aa). Positions 118-177 are enriched in basic and acidic residues; sequence AEKETANKKAEEASPKKEEAKEVDSKESNTDKTDKDKPAKKDEAKAEADKPATEAGKERA. Catalytic domain stretches follow at residues 176–616 and 621–1046; these read RAAT…TPEA and EAKR…PAVT. 2 G5 domains span residues 1059–1138 and 1150–1230; these read NVET…GAPV and TTEV…GTMV. The disordered stretch occupies residues 1244 to 1290; sequence EEKPKLEIPSQPAPSTAPAEESKVLPQDPAPVVTEKKLPETGTHDSA. Basic and acidic residues predominate over residues 1277 to 1286; that stretch reads TEKKLPETGT. The short motif at 1281–1285 is the LPXTG sorting signal element; sequence LPETG. At Thr1284 the chain carries Pentaglycyl murein peptidoglycan amidated threonine. Residues 1285–1312 constitute a propeptide, removed by sortase; it reads GTHDSAGLVVAGLMSTLAAYGLTKRKED.

This sequence belongs to the glycosyl hydrolase 20 family.

Its subcellular location is the secreted. The protein resides in the cell wall. The catalysed reaction is Hydrolysis of terminal non-reducing N-acetyl-D-hexosamine residues in N-acetyl-beta-D-hexosaminides.. The polypeptide is Beta-N-acetylhexosaminidase (strH) (Streptococcus pneumoniae serotype 4 (strain ATCC BAA-334 / TIGR4)).